Reading from the N-terminus, the 295-residue chain is Light-independent protochlorophyllide reductase iron-sulfur ATP-binding protein (295 aa).

ATP is bound by residues 10–15 and lysine 39; that span reads GIGKST. Serine 14 lines the Mg(2+) pocket. Residues cysteine 95 and cysteine 129 each contribute to the [4Fe-4S] cluster site. 180 to 181 serves as a coordination point for ATP; sequence NR. Positions 275–289 are enriched in basic and acidic residues; that stretch reads TKDKKENKKEDKENS. The segment at 275–295 is disordered; the sequence is TKDKKENKKEDKENSADFTWL.

The protein belongs to the NifH/BchL/ChlL family. As to quaternary structure, homodimer. Protochlorophyllide reductase is composed of three subunits; ChlL, ChlN and ChlB. [4Fe-4S] cluster is required as a cofactor.

It is found in the plastid. The protein resides in the chloroplast. It carries out the reaction chlorophyllide a + oxidized 2[4Fe-4S]-[ferredoxin] + 2 ADP + 2 phosphate = protochlorophyllide a + reduced 2[4Fe-4S]-[ferredoxin] + 2 ATP + 2 H2O. It functions in the pathway porphyrin-containing compound metabolism; chlorophyll biosynthesis (light-independent). In terms of biological role, component of the dark-operative protochlorophyllide reductase (DPOR) that uses Mg-ATP and reduced ferredoxin to reduce ring D of protochlorophyllide (Pchlide) to form chlorophyllide a (Chlide). This reaction is light-independent. The L component serves as a unique electron donor to the NB-component of the complex, and binds Mg-ATP. The polypeptide is Light-independent protochlorophyllide reductase iron-sulfur ATP-binding protein (Physcomitrium patens (Spreading-leaved earth moss)).